The primary structure comprises 170 residues: Large ribosomal subunit protein uL10 (170 aa).

Belongs to the universal ribosomal protein uL10 family. In terms of assembly, part of the ribosomal stalk of the 50S ribosomal subunit. The N-terminus interacts with L11 and the large rRNA to form the base of the stalk. The C-terminus forms an elongated spine to which L12 dimers bind in a sequential fashion forming a multimeric L10(L12)X complex.

Forms part of the ribosomal stalk, playing a central role in the interaction of the ribosome with GTP-bound translation factors. The chain is Large ribosomal subunit protein uL10 from Jannaschia sp. (strain CCS1).